Reading from the N-terminus, the 360-residue chain is Phospho-N-acetylmuramoyl-pentapeptide-transferase (360 aa).

10 consecutive transmembrane segments (helical) span residues 26-46 (AVLS…KMIL), 73-93 (TMGG…WGDL), 94-114 (SNPY…IGFV), 132-152 (WKYF…YMIG), 168-188 (IMPQ…VGTS), 199-219 (GLAI…AWAT), 239-259 (LVIF…FNTY), 263-283 (VFMG…IAVL), 288-308 (FLLV…ILQV), and 338-358 (VIIR…VTLK).

Belongs to the glycosyltransferase 4 family. MraY subfamily. Mg(2+) is required as a cofactor.

It localises to the cell inner membrane. It catalyses the reaction UDP-N-acetyl-alpha-D-muramoyl-L-alanyl-gamma-D-glutamyl-meso-2,6-diaminopimeloyl-D-alanyl-D-alanine + di-trans,octa-cis-undecaprenyl phosphate = di-trans,octa-cis-undecaprenyl diphospho-N-acetyl-alpha-D-muramoyl-L-alanyl-D-glutamyl-meso-2,6-diaminopimeloyl-D-alanyl-D-alanine + UMP. Its pathway is cell wall biogenesis; peptidoglycan biosynthesis. Catalyzes the initial step of the lipid cycle reactions in the biosynthesis of the cell wall peptidoglycan: transfers peptidoglycan precursor phospho-MurNAc-pentapeptide from UDP-MurNAc-pentapeptide onto the lipid carrier undecaprenyl phosphate, yielding undecaprenyl-pyrophosphoryl-MurNAc-pentapeptide, known as lipid I. This chain is Phospho-N-acetylmuramoyl-pentapeptide-transferase, found in Actinobacillus succinogenes (strain ATCC 55618 / DSM 22257 / CCUG 43843 / 130Z).